A 309-amino-acid polypeptide reads, in one-letter code: Olfactory receptor 10J5 (309 aa).

Residues 1 to 25 (MKRKNFTEVSEFIFLGFSSFGKHQI) lie on the Extracellular side of the membrane. N5 is a glycosylation site (N-linked (GlcNAc...) asparagine). The helical transmembrane segment at 26-46 (TLFVVFLTVYILTLVANIIIV) threads the bilayer. Residues 47 to 54 (TIICIDHH) lie on the Cytoplasmic side of the membrane. The chain crosses the membrane as a helical span at residues 55-75 (LHTPMYFFLSMLASSETVYTL). The Extracellular portion of the chain corresponds to 76 to 99 (VIVPRMLLSLIFHNQPISLAGCAT). C97 and C188 are disulfide-bonded. Residues 100 to 120 (QMFFFVILATNNCFLLTAMGY) form a helical membrane-spanning segment. The Cytoplasmic segment spans residues 121–139 (DRYVAICRPLRYTVIMSKG). Residues 140–160 (LCAQLVCGSFGIGLTMAVLHV) traverse the membrane as a helical segment. The Extracellular segment spans residues 161-196 (TAMFNLPFCGTVVDHFFCDIYPVMKLSCIDTTINEI). Residues 197–216 (INYGVSSFVIFVPIGLIFIS) traverse the membrane as a helical segment. Over 217–236 (YVLVISSILQIASAEGRKKT) the chain is Cytoplasmic. Residues 237–257 (FATCVSHLTVVIVHCGCASIA) traverse the membrane as a helical segment. The Extracellular segment spans residues 258–270 (YLKPKSESSIEKD). A helical transmembrane segment spans residues 271–291 (LVLSVTYTIITPLLNPVVYSL). Topologically, residues 292–309 (RNKEVKDALCRVVGRNIS) are cytoplasmic.

This sequence belongs to the G-protein coupled receptor 1 family. Expressed in both the aorta, the coronary artery and umbilical vein endothelial cells (HUVECs) (at protein level).

The protein localises to the cell membrane. Its function is as follows. Olfactory receptor. Activated by the synthetic floral odorant, lyral, and by alpha-cedrene, a sesquiterpene constituent of cedarwood oil. Its activation increases intracellular Ca(2+). Acts as a key regulator of myogenesis through its actions on cell migration and adhesion by activating the Ca(2+)-dependent AKT signal transduction pathway. Also acts as a regulator of angiogenesis. Moreover, plays a role in the regulation of lipid accumulation in hepatocytes via the cAMP-PKA pathway. May be involved in sperm chemotaxis and motility. This is Olfactory receptor 10J5 from Homo sapiens (Human).